The sequence spans 319 residues: Glutamyl-Q tRNA(Asp) synthetase (319 aa).

Residues 23-27 (RFAPS) and E59 each bind L-glutamate. Residues 26–36 (PSPSGPLHAGS) carry the 'HIGH' region motif. C115, C117, Y139, and C143 together coordinate Zn(2+). 2 residues coordinate L-glutamate: Y197 and R215. Positions 254 to 258 (KLSKQ) match the 'KMSKS' region motif. K257 is an ATP binding site.

This sequence belongs to the class-I aminoacyl-tRNA synthetase family. GluQ subfamily. Requires Zn(2+) as cofactor.

Its function is as follows. Catalyzes the tRNA-independent activation of glutamate in presence of ATP and the subsequent transfer of glutamate onto a tRNA(Asp). Glutamate is transferred on the 2-amino-5-(4,5-dihydroxy-2-cyclopenten-1-yl) moiety of the queuosine in the wobble position of the QUC anticodon. The polypeptide is Glutamyl-Q tRNA(Asp) synthetase (Bordetella bronchiseptica (strain ATCC BAA-588 / NCTC 13252 / RB50) (Alcaligenes bronchisepticus)).